An 88-amino-acid polypeptide reads, in one-letter code: Small ribosomal subunit protein uS17 (88 aa).

This sequence belongs to the universal ribosomal protein uS17 family. Part of the 30S ribosomal subunit.

Functionally, one of the primary rRNA binding proteins, it binds specifically to the 5'-end of 16S ribosomal RNA. This chain is Small ribosomal subunit protein uS17, found in Maridesulfovibrio salexigens (strain ATCC 14822 / DSM 2638 / NCIMB 8403 / VKM B-1763) (Desulfovibrio salexigens).